The sequence spans 395 residues: Xylose isomerase (395 aa).

Active-site residues include histidine 54 and aspartate 57. Mg(2+) contacts are provided by glutamate 181, glutamate 217, histidine 220, aspartate 245, aspartate 255, aspartate 257, and aspartate 293.

The protein belongs to the xylose isomerase family. Homotetramer. Mg(2+) serves as cofactor.

Its subcellular location is the cytoplasm. It carries out the reaction alpha-D-xylose = alpha-D-xylulofuranose. The chain is Xylose isomerase (xylA) from Arthrobacter sp. (strain NRRL B3728).